The chain runs to 337 residues: uncharacterized protein (337 aa).

The next 2 membrane-spanning stretches (helical) occupy residues 4–24 and 26–46; these read FIFF…FSLI and LLLW…LFAL.

The protein belongs to the plectrovirus ORF2 family.

Its subcellular location is the host membrane. This is an uncharacterized protein from Spiroplasma melliferum (SpV1).